Here is a 113-residue protein sequence, read N- to C-terminus: Sensorin-A (113 aa).

Positions 1–32 (MPSRAATSPLNVQMMVVLCIVCLALQAVAANA) are cleaved as a signal peptide. At Phe54 the chain carries Phenylalanine amide. The propeptide occupies 58–113 (SSSETYSTNLINLLSRQLVSQEELRAILEKQPILLDEVVKILDRNDDGYITVADLL). Positions 87–113 (KQPILLDEVVKILDRNDDGYITVADLL) constitute an EF-hand domain. Ca(2+)-binding residues include Asp100, Asn102, Asp104, Tyr106, and Asp111.

As to expression, seems to be specific to the mechanosensory neurons of the central nervous system.

Its subcellular location is the secreted. Its function is as follows. May function as an inhibitory cotransmitter acting in conjunction with the fast excitatory transmitter released by sensory neurons. The peptide selectively inhibits certain postsynaptic cells probably by means of sensorin A release. This chain is Sensorin-A (PSC1), found in Aplysia californica (California sea hare).